Consider the following 147-residue polypeptide: Hemoglobin subunit beta (147 aa).

Positions 3 to 147 constitute a Globin domain; it reads EWTDFERATI…VVSSLGRQYH (145 aa). Heme b is bound by residues His64 and His93.

Belongs to the globin family. In terms of assembly, hb 1 is a heterotetramer of two alpha-1 and two beta chains. Hb 2 is a heterotetramer of two alpha-2 and two beta chains. In terms of tissue distribution, red blood cells.

Involved in oxygen transport from gills to the various peripheral tissues. The protein is Hemoglobin subunit beta (hbb) of Cottoperca gobio (Frogmouth).